Reading from the N-terminus, the 1670-residue chain is Collagen alpha-3(IV) chain (1670 aa).

An N-terminal signal peptide occupies residues 1–28 (MSARTAPRPQVLLLPLLLVLLAAAPAAS). Positions 29–42 (KGCVCKDKGQCFCD) are 7S domain. The interval 43-1438 (GAKGEKGEKG…KGKRGDSGSP (1396 aa)) is triple-helical region. Disordered stretches follow at residues 49 to 78 (GEKG…QGPK), 167 to 469 (LDAK…DGPK), and 502 to 1442 (GRQG…ATWT). The segment covering 176–200 (PGAPGPQGLPGPPGFPGPVGPPGPP) has biased composition (pro residues). The span at 202–212 (FFGFPGAMGPR) shows a compositional bias: low complexity. Basic and acidic residues predominate over residues 217–231 (HMGERVIGHKGERGV). The span at 242 to 251 (GTVIVTLTGP) shows a compositional bias: low complexity. N-linked (GlcNAc...) asparagine glycosylation occurs at N253. Over residues 253–266 (NRTDLKGEKGDKGA) the composition is skewed to basic and acidic residues. Low complexity predominate over residues 382–394 (SPGSSRPGLRGAP). The span at 402–411 (SKGERGRPGK) shows a compositional bias: basic and acidic residues. The segment covering 415–428 (GTPGSPGCAGSPGL) has biased composition (low complexity). 3 stretches are compositionally biased toward pro residues: residues 429–438 (PGSPGPPGPP), 598–618 (PGDP…PPGY), and 654–675 (VPGP…PPGI). Residues 791–793 (RGD) carry the Cell attachment site motif. A compositionally biased stretch (pro residues) spans 900–909 (IGPPGPPGNP). Positions 974 to 987 (VPGMPGLKGLKGLP) are enriched in low complexity. The short motif at 996–998 (RGD) is the Cell attachment site element. Low complexity-rich tracts occupy residues 1013–1025 (IPGS…MPGS), 1094–1105 (LGPAGPEGAPGS), and 1118–1133 (HGDL…LGPP). Pro residues predominate over residues 1135–1148 (IRGPPGLPGFPGSP). Positions 1154 to 1156 (RGD) match the Cell attachment site motif. Low complexity-rich tracts occupy residues 1230 to 1250 (PGAI…RGSP) and 1290 to 1299 (PPGRLGAPGT). The short motif at 1306–1308 (RGD) is the Cell attachment site element. The segment covering 1332–1341 (PPGPIGPKGP) has biased composition (pro residues). 2 short sequence motifs (cell attachment site) span residues 1345 to 1347 (RGD) and 1432 to 1434 (RGD). Positions 1427-1444 (GLKGKRGDSGSPATWTTR) are epitope recognized by Goodpasture antibodies. The Collagen IV NC1 domain occupies 1445–1669 (GFVFTRHSQT…SRCQVCMKKR (225 aa)). Cystine bridges form between C1460-C1551, C1493-C1548, C1505-C1511, C1570-C1665, C1604-C1662, and C1616-C1622. Residues 1479 to 1557 (NQRAHGQDLG…CTVCEGPAIA (79 aa)) form a required for the anti-angiogenic activity of tumstatin region. Residue M1533 forms an S-Lysyl-methionine sulfilimine (Met-Lys) (interchain with K-1651) linkage. Residues 1610–1628 (ASPFLECHGRGTCNYYSNS) are required for the anti-tumor cell activity of tumstatin. K1651 is covalently cross-linked (S-Lysyl-methionine sulfilimine (Lys-Met) (interchain with M-1533)).

Belongs to the type IV collagen family. As to quaternary structure, there are six type IV collagen isoforms, alpha 1(IV)-alpha 6(IV), each of which can form a triple helix structure with 2 other chains to generate type IV collagen network. The alpha 3(IV) chain forms a triple helical protomer with alpha 4(IV) and alpha 5(IV); this triple helical structure dimerizes through NC1-NC1 domain interactions such that the alpha 3(IV), alpha 4(IV) and alpha 5(IV) chains of one protomer connect with the alpha 5(IV), alpha 4(IV) and alpha 3(IV) chains of the opposite promoter, respectively. Interacts with ITGB3. Associates with LAMB2 at the neuromuscular junction and in GBM. In terms of processing, prolines at the third position of the tripeptide repeating unit (G-X-Y) are hydroxylated in some or all of the chains. Post-translationally, isoform 2 contains an additional N-linked glycosylation site. Type IV collagens contain numerous cysteine residues which are involved in inter- and intramolecular disulfide bonding. 12 of these, located in the NC1 domain, are conserved in all known type IV collagens. In terms of processing, the trimeric structure of the NC1 domains is stabilized by covalent bonds between Lys and Met residues. Post-translationally, phosphorylated. Thought to be phosphorylated by CERT, but CERT does not have kinase activity. As to expression, alpha 3 and alpha 4 type IV collagens are colocalized and present in kidney, eye, basement membranes of lens capsule, cochlea, lung, skeletal muscle, aorta, synaptic fibers, fetal kidney and fetal lung. PubMed:8083201 reports similar levels of expression of alpha 3 and alpha 4 type IV collagens in kidney, but PubMed:7523402 reports that in kidney levels of alpha 3 type IV collagen are significantly lower than those of alpha 4 type IV collagen. According to PubMed:8083201, alpha 3 type IV collagen is not detected in heart, brain, placenta, liver, pancreas, extrasynaptic muscle fibers, endoneurial and perineurial nerves, fetal brain, fetal heart and fetal liver. According to PubMed:7523402, alpha 3 type IV collagen is strongly expressed in pancreas, neuroretina and calvaria and not expressed in adrenal, ileum and skin. Isoform 1 and isoform 3 are strongly expressed in kidney, lung, suprarenal capsule, muscle and spleen, in each of these tissues isoform 1 is more abundant than isoform 3. Isoform 1 and isoform 3 are expressed at low levels in artery, fat, pericardium and peripherical nerve, but not in placenta, mesangium, skin, pleura and cultured umbilical endothelial cells.

The protein resides in the secreted. It localises to the extracellular space. It is found in the extracellular matrix. Its subcellular location is the basement membrane. Type IV collagen is the major structural component of glomerular basement membranes (GBM), forming a 'chicken-wire' meshwork together with laminins, proteoglycans and entactin/nidogen. Functionally, tumstatin, a cleavage fragment corresponding to the collagen alpha 3(IV) NC1 domain, possesses both anti-angiogenic and anti-tumor cell activity; these two anti-tumor properties may be regulated via RGD-independent ITGB3-mediated mechanisms. This chain is Collagen alpha-3(IV) chain (COL4A3), found in Homo sapiens (Human).